The sequence spans 693 residues: Phosphoribosylformylglycinamidine synthase subunit PurL (693 aa).

His34 is a catalytic residue. 2 residues coordinate ATP: Tyr37 and Lys76. A Mg(2+)-binding site is contributed by Glu78. Substrate contacts are provided by residues 79–82 and Arg101; that span reads SHNH. His80 serves as the catalytic Proton acceptor. Asp102 lines the Mg(2+) pocket. Residue Gln222 participates in substrate binding. Asp248 is a Mg(2+) binding site. 292 to 294 lines the substrate pocket; that stretch reads ETQ. Asp470 and Gly507 together coordinate ATP. Substrate is bound at residue Ser510.

Belongs to the FGAMS family. As to quaternary structure, monomer. Part of the FGAM synthase complex composed of 1 PurL, 1 PurQ and 2 PurS subunits.

Its subcellular location is the cytoplasm. It catalyses the reaction N(2)-formyl-N(1)-(5-phospho-beta-D-ribosyl)glycinamide + L-glutamine + ATP + H2O = 2-formamido-N(1)-(5-O-phospho-beta-D-ribosyl)acetamidine + L-glutamate + ADP + phosphate + H(+). The protein operates within purine metabolism; IMP biosynthesis via de novo pathway; 5-amino-1-(5-phospho-D-ribosyl)imidazole from N(2)-formyl-N(1)-(5-phospho-D-ribosyl)glycinamide: step 1/2. Functionally, part of the phosphoribosylformylglycinamidine synthase complex involved in the purines biosynthetic pathway. Catalyzes the ATP-dependent conversion of formylglycinamide ribonucleotide (FGAR) and glutamine to yield formylglycinamidine ribonucleotide (FGAM) and glutamate. The FGAM synthase complex is composed of three subunits. PurQ produces an ammonia molecule by converting glutamine to glutamate. PurL transfers the ammonia molecule to FGAR to form FGAM in an ATP-dependent manner. PurS interacts with PurQ and PurL and is thought to assist in the transfer of the ammonia molecule from PurQ to PurL. The sequence is that of Phosphoribosylformylglycinamidine synthase subunit PurL from Pyrobaculum neutrophilum (strain DSM 2338 / JCM 9278 / NBRC 100436 / V24Sta) (Thermoproteus neutrophilus).